A 173-amino-acid chain; its full sequence is ATP-dependent protease subunit HslV (173 aa).

Residue T2 is part of the active site. Residues G157, C160, and T163 each contribute to the Na(+) site.

The protein belongs to the peptidase T1B family. HslV subfamily. As to quaternary structure, a double ring-shaped homohexamer of HslV is capped on each side by a ring-shaped HslU homohexamer. The assembly of the HslU/HslV complex is dependent on binding of ATP.

The protein localises to the cytoplasm. The enzyme catalyses ATP-dependent cleavage of peptide bonds with broad specificity.. Allosterically activated by HslU binding. In terms of biological role, protease subunit of a proteasome-like degradation complex believed to be a general protein degrading machinery. The chain is ATP-dependent protease subunit HslV from Nitrosomonas eutropha (strain DSM 101675 / C91 / Nm57).